The following is a 512-amino-acid chain: 2-isopropylmalate synthase (512 aa).

Residues 5-268 enclose the Pyruvate carboxyltransferase domain; sequence LIIFDTTLRD…ELGIDTQHIV (264 aa). Mn(2+) is bound by residues aspartate 14, histidine 202, histidine 204, and asparagine 239. Residues 394 to 512 form a regulatory domain region; sequence GFVSLSQRSE…SKAERVAAQG (119 aa).

This sequence belongs to the alpha-IPM synthase/homocitrate synthase family. LeuA type 1 subfamily. As to quaternary structure, homodimer. Requires Mn(2+) as cofactor.

The protein localises to the cytoplasm. It catalyses the reaction 3-methyl-2-oxobutanoate + acetyl-CoA + H2O = (2S)-2-isopropylmalate + CoA + H(+). Its pathway is amino-acid biosynthesis; L-leucine biosynthesis; L-leucine from 3-methyl-2-oxobutanoate: step 1/4. In terms of biological role, catalyzes the condensation of the acetyl group of acetyl-CoA with 3-methyl-2-oxobutanoate (2-ketoisovalerate) to form 3-carboxy-3-hydroxy-4-methylpentanoate (2-isopropylmalate). This Paracidovorax citrulli (strain AAC00-1) (Acidovorax citrulli) protein is 2-isopropylmalate synthase.